The primary structure comprises 122 residues: Small ribosomal subunit protein uS13 (122 aa).

A disordered region spans residues 91–122 (RHRRGLPVHGQRTKTNARTRKGPKRTVAGKKK).

Belongs to the universal ribosomal protein uS13 family. In terms of assembly, part of the 30S ribosomal subunit. Forms a loose heterodimer with protein S19. Forms two bridges to the 50S subunit in the 70S ribosome.

Its function is as follows. Located at the top of the head of the 30S subunit, it contacts several helices of the 16S rRNA. In the 70S ribosome it contacts the 23S rRNA (bridge B1a) and protein L5 of the 50S subunit (bridge B1b), connecting the 2 subunits; these bridges are implicated in subunit movement. Contacts the tRNAs in the A and P-sites. In Kocuria rhizophila (strain ATCC 9341 / DSM 348 / NBRC 103217 / DC2201), this protein is Small ribosomal subunit protein uS13.